Here is a 173-residue protein sequence, read N- to C-terminus: Putative metal-dependent hydrolase OB0413 (173 aa).

The Zn(2+) site is built by histidine 64, histidine 155, and histidine 159.

Belongs to the metal hydrolase YfiT family. In terms of assembly, homodimer. Zn(2+) serves as cofactor.

The protein localises to the cytoplasm. In terms of biological role, possible metal-dependent hydrolase. The protein is Putative metal-dependent hydrolase OB0413 of Oceanobacillus iheyensis (strain DSM 14371 / CIP 107618 / JCM 11309 / KCTC 3954 / HTE831).